A 360-amino-acid polypeptide reads, in one-letter code: Peptide chain release factor 1 (360 aa).

An N5-methylglutamine modification is found at glutamine 236.

The protein belongs to the prokaryotic/mitochondrial release factor family. Methylated by PrmC. Methylation increases the termination efficiency of RF1.

The protein resides in the cytoplasm. Functionally, peptide chain release factor 1 directs the termination of translation in response to the peptide chain termination codons UAG and UAA. The polypeptide is Peptide chain release factor 1 (Limosilactobacillus reuteri subsp. reuteri (strain JCM 1112) (Lactobacillus reuteri)).